Reading from the N-terminus, the 448-residue chain is Phosphoglucosamine mutase (448 aa).

Catalysis depends on Ser100, which acts as the Phosphoserine intermediate. Positions 100, 240, 242, and 244 each coordinate Mg(2+). Ser100 is subject to Phosphoserine.

Belongs to the phosphohexose mutase family. Requires Mg(2+) as cofactor. In terms of processing, activated by phosphorylation.

It catalyses the reaction alpha-D-glucosamine 1-phosphate = D-glucosamine 6-phosphate. Catalyzes the conversion of glucosamine-6-phosphate to glucosamine-1-phosphate. In Bacillus anthracis (strain A0248), this protein is Phosphoglucosamine mutase.